The chain runs to 310 residues: Collagen-like protein V6 (310 aa).

Positions 1 to 41 are enriched in polar residues; it reads MSLSTLFSPNTYNINSKSQTLNNLPSNPTSQTNTLWSNNAY. The interval 1-183 is disordered; sequence MSLSTLFSPN…GDPGAKGDPG (183 aa). Collagen-like domains are found at residues 61 to 119 and 123 to 182; these read GQKG…KGQA and GLKG…KGDP. The segment covering 92-101 has biased composition (basic and acidic residues); the sequence is SGDKGDKGDS. N-linked (GlcNAc...) asparagine; by host glycans are attached at residues Asn-227 and Asn-264.

Belongs to the sputnik virus V6 family.

The sequence is that of Collagen-like protein V6 from Sputnik virophage.